The sequence spans 122 residues: Small ribosomal subunit protein uS13 (122 aa).

Residues 93-122 (RRGLPVRGQKTKTNARTRKGPKKTMANKKK) are disordered.

The protein belongs to the universal ribosomal protein uS13 family. Part of the 30S ribosomal subunit. Forms a loose heterodimer with protein S19. Forms two bridges to the 50S subunit in the 70S ribosome.

Its function is as follows. Located at the top of the head of the 30S subunit, it contacts several helices of the 16S rRNA. In the 70S ribosome it contacts the 23S rRNA (bridge B1a) and protein L5 of the 50S subunit (bridge B1b), connecting the 2 subunits; these bridges are implicated in subunit movement. Contacts the tRNAs in the A and P-sites. This chain is Small ribosomal subunit protein uS13, found in Clostridium botulinum (strain Alaska E43 / Type E3).